The sequence spans 160 residues: Ubiquitin-like protein ATG12 (160 aa).

A disordered region spans residues 1–40 (MSETPKDQGPSSPSPSPSPSAASPMPLADNEVAGSGASSP). Residue glycine 160 forms a Glycyl lysine isopeptide (Gly-Lys) (interchain with K-102 in ATG5) linkage.

Belongs to the ATG12 family. Forms a conjugate with ATG5. Forms a thioester bond with the 'Cys-196' of ATG10. Interacts with the ATG7 C-terminal 40 amino acids domain. The ATG12-ATG5 conjugate forms a complex with several units of ATG16. The ATG12-ATG5 conjugate also associates with ATG3.

The protein resides in the preautophagosomal structure membrane. Functionally, ubiquitin-like protein involved in cytoplasm to vacuole transport (Cvt), autophagy vesicles formation, mitophagy, and nucleophagy. Conjugation with ATG5 through a ubiquitin-like conjugating system involving also ATG7 as an E1-like activating enzyme and ATG10 as an E2-like conjugating enzyme, is essential for its function. The ATG12-ATG5 conjugate acts as an E3-like enzyme which is required for lipidation of ATG8 and ATG8 association to the vesicle membranes. ATG12-ATG5 rearranges the ATG3 catalytic center and enhances its E2 activity. Autophagy is required for proper vegetative growth, asexual/sexual reproduction, and full virulence. Autophagy is particularly involved in the biosynthesis of deoxynivalenol (DON), an important virulence determinant. This chain is Ubiquitin-like protein ATG12, found in Gibberella zeae (strain ATCC MYA-4620 / CBS 123657 / FGSC 9075 / NRRL 31084 / PH-1) (Wheat head blight fungus).